Here is a 660-residue protein sequence, read N- to C-terminus: Phosphatidylinositol-3-phosphate phosphatase MTMR7 (660 aa).

The region spanning G126–Y504 is the Myotubularin phosphatase domain. Residues N250, N275, and I276 each contribute to the a 1,2-diacyl-sn-glycero-3-phospho-(1D-myo-inositol-3-phosphate) site. C338 serves as the catalytic Phosphocysteine intermediate. 7 residues coordinate a 1,2-diacyl-sn-glycero-3-phospho-(1D-myo-inositol-3-phosphate): S339, D340, G341, W342, D343, R344, and R384. Positions R514–K558 form a coiled coil. Residues K554 to A660 form a disordered region. Residues S566 to Q596 are compositionally biased toward polar residues. Residue T578 is modified to Phosphothreonine. The span at A641–D653 shows a compositional bias: basic and acidic residues.

This sequence belongs to the protein-tyrosine phosphatase family. Non-receptor class myotubularin subfamily. In terms of assembly, heterodimer (via C-terminus) with MTMR9 (via coiled coil domain); the interaction enhances MTMR7 catalytic activity. Does not homodimerize. Interacts with RAB1B (in GDP-bound form).

The protein resides in the cytoplasm. The protein localises to the endomembrane system. It carries out the reaction a 1,2-diacyl-sn-glycero-3-phospho-(1D-myo-inositol-3-phosphate) + H2O = a 1,2-diacyl-sn-glycero-3-phospho-(1D-myo-inositol) + phosphate. The enzyme catalyses 1D-myo-inositol 1,3-bisphosphate + H2O = 1D-myo-inositol 1-phosphate + phosphate. Interaction with MTMR9 increases phosphatase activity. Its function is as follows. Lipid phosphatase that specifically dephosphorylates the D-3 position of phosphatidylinositol 3-phosphate (PtdIns(3)P) and inositol 1,3-bisphosphate (Ins(1,3)P2). In Pongo abelii (Sumatran orangutan), this protein is Phosphatidylinositol-3-phosphate phosphatase MTMR7.